The chain runs to 403 residues: S-adenosylmethionine synthase (403 aa).

Position 140–145 (140–145) interacts with ATP; it reads GKGSTD.

The protein belongs to the AdoMet synthase 2 family. Mg(2+) serves as cofactor.

It carries out the reaction L-methionine + ATP + H2O = S-adenosyl-L-methionine + phosphate + diphosphate. It functions in the pathway amino-acid biosynthesis; S-adenosyl-L-methionine biosynthesis; S-adenosyl-L-methionine from L-methionine: step 1/1. Catalyzes the formation of S-adenosylmethionine from methionine and ATP. The chain is S-adenosylmethionine synthase from Sulfolobus acidocaldarius (strain ATCC 33909 / DSM 639 / JCM 8929 / NBRC 15157 / NCIMB 11770).